The primary structure comprises 133 residues: Heat shock protein 15 (133 aa).

Positions 9–71 (VRLDKWLWAA…DERTVIVKAI (63 aa)) constitute an S4 RNA-binding domain. Residues 105–133 (NALTMPHPDRRPDKKERRDLLRFKHGDSE) are disordered. Residues 111–133 (HPDRRPDKKERRDLLRFKHGDSE) are compositionally biased toward basic and acidic residues.

Belongs to the HSP15 family. In terms of assembly, monomer.

Its function is as follows. Involved in the recycling of free 50S ribosomal subunits that still carry a nascent chain. Binds RNA more specifically than DNA. Binds with very high affinity to the free 50S ribosomal subunit. Does not bind it when it is part of the 70S ribosome. The polypeptide is Heat shock protein 15 (hslR) (Escherichia coli O157:H7).